Reading from the N-terminus, the 340-residue chain is Mitochondrial carrier protein CoAc1 (340 aa).

6 consecutive transmembrane segments (helical) span residues 22–42, 85–105, 130–147, 199–219, 237–257, and 297–317; these read ALDLLPVYAKELIAGGAAGAF, FYKGNGASVLRIVPYAALHYM, LLAGSAAGGTAVLCTYPL, GVGPTLIGILPYAGLKFYIYE, LSCGALAGLFGQTLTYPLDVV, and FAGLSLNYVKVVPSVAIGFTT. 3 Solcar repeats span residues 27 to 113, 124 to 224, and 231 to 324; these read PVYA…YRCW, TGPV…LKSQ, and DSVI…MKAL.

This sequence belongs to the mitochondrial carrier (TC 2.A.29) family. Expressed throughout the plant.

The protein localises to the mitochondrion inner membrane. In terms of biological role, required for the accumulation of coenzyme A in the mitochondrial matrix. The sequence is that of Mitochondrial carrier protein CoAc1 from Zea mays (Maize).